The primary structure comprises 125 residues: Neuropeptide B (125 aa).

The signal sequence occupies residues 1–24 (MARSATLAAAALALCLLLAPPGLA). Residues 54–73 (RRSQPYRGAEPPGGAGASPE) form a disordered region. The propeptide occupies 56–125 (SQPYRGAEPP…SLRAADCLAA (70 aa)).

Belongs to the neuropeptide B/W family. In terms of tissue distribution, widely expressed in the central nervous system. High levels are found in substantia nigra, hypothalamus, hippocampus, spinal cord, placenta and fetal brain; lower levels are found in testis, uterus and ovary. Also detected at high levels in colorectal adenocarcinoma.

Its subcellular location is the secreted. Functionally, may be involved in the regulation of feeding, neuroendocrine system, memory, learning and in the afferent pain pathway. The polypeptide is Neuropeptide B (NPB) (Homo sapiens (Human)).